We begin with the raw amino-acid sequence, 237 residues long: tRNA (guanine-N(7)-)-methyltransferase (237 aa).

S-adenosyl-L-methionine-binding residues include Glu-68, Glu-93, Asp-120, and Asp-143. Residue Asp-143 is part of the active site. Substrate-binding positions include Lys-147, Asp-179, and 216–219 (TKFE).

It belongs to the class I-like SAM-binding methyltransferase superfamily. TrmB family.

The catalysed reaction is guanosine(46) in tRNA + S-adenosyl-L-methionine = N(7)-methylguanosine(46) in tRNA + S-adenosyl-L-homocysteine. It functions in the pathway tRNA modification; N(7)-methylguanine-tRNA biosynthesis. In terms of biological role, catalyzes the formation of N(7)-methylguanine at position 46 (m7G46) in tRNA. The chain is tRNA (guanine-N(7)-)-methyltransferase from Shewanella pealeana (strain ATCC 700345 / ANG-SQ1).